A 208-amino-acid chain; its full sequence is Probable GTP-binding protein EngB (208 aa).

An EngB-type G domain is found at 23 to 205 (LTSEMVVLGR…RQTLLKYLLT (183 aa)). GTP contacts are provided by residues 31–38 (GRSNVGKS), 57–61 (GKTRL), 84–87 (DLPG), 154–157 (TKFD), and 182–184 (FNA). Serine 38 and threonine 59 together coordinate Mg(2+).

Belongs to the TRAFAC class TrmE-Era-EngA-EngB-Septin-like GTPase superfamily. EngB GTPase family. Mg(2+) serves as cofactor.

Necessary for normal cell division and for the maintenance of normal septation. This is Probable GTP-binding protein EngB from Helicobacter acinonychis (strain Sheeba).